We begin with the raw amino-acid sequence, 181 residues long: Ribosome maturation factor RimM (181 aa).

Residues 100 to 177 (EEGFYWMQLI…QIQVDWQLED (78 aa)) form the PRC barrel domain.

This sequence belongs to the RimM family. As to quaternary structure, binds ribosomal protein uS19.

It localises to the cytoplasm. Its function is as follows. An accessory protein needed during the final step in the assembly of 30S ribosomal subunit, possibly for assembly of the head region. Essential for efficient processing of 16S rRNA. May be needed both before and after RbfA during the maturation of 16S rRNA. It has affinity for free ribosomal 30S subunits but not for 70S ribosomes. The protein is Ribosome maturation factor RimM of Hydrogenovibrio crunogenus (strain DSM 25203 / XCL-2) (Thiomicrospira crunogena).